A 455-amino-acid chain; its full sequence is Serine--tRNA ligase (455 aa).

Position 252 to 254 (252 to 254) interacts with L-serine; that stretch reads TAE. ATP-binding positions include 283–285 and V299; that span reads RKE. E306 serves as a coordination point for L-serine. Residue 370 to 373 coordinates ATP; it reads EVVS. T406 lines the L-serine pocket.

The protein belongs to the class-II aminoacyl-tRNA synthetase family. Type-1 seryl-tRNA synthetase subfamily. As to quaternary structure, homodimer. The tRNA molecule binds across the dimer.

Its subcellular location is the cytoplasm. It carries out the reaction tRNA(Ser) + L-serine + ATP = L-seryl-tRNA(Ser) + AMP + diphosphate + H(+). The catalysed reaction is tRNA(Sec) + L-serine + ATP = L-seryl-tRNA(Sec) + AMP + diphosphate + H(+). It functions in the pathway aminoacyl-tRNA biosynthesis; selenocysteinyl-tRNA(Sec) biosynthesis; L-seryl-tRNA(Sec) from L-serine and tRNA(Sec): step 1/1. Its function is as follows. Catalyzes the attachment of serine to tRNA(Ser). Is also able to aminoacylate tRNA(Sec) with serine, to form the misacylated tRNA L-seryl-tRNA(Sec), which will be further converted into selenocysteinyl-tRNA(Sec). The chain is Serine--tRNA ligase from Pyrococcus horikoshii (strain ATCC 700860 / DSM 12428 / JCM 9974 / NBRC 100139 / OT-3).